The primary structure comprises 435 residues: Chaperone SurA (435 aa).

Residues 1–29 (MINKTLHTKHTLLGLLAMAVLMIPVWSQA) form the signal peptide. PpiC domains are found at residues 180–281 (QEDF…KMID) and 290–390 (VTQY…RVDD).

It localises to the periplasm. The catalysed reaction is [protein]-peptidylproline (omega=180) = [protein]-peptidylproline (omega=0). In terms of biological role, chaperone involved in the correct folding and assembly of outer membrane proteins. Recognizes specific patterns of aromatic residues and the orientation of their side chains, which are found more frequently in integral outer membrane proteins. May act in both early periplasmic and late outer membrane-associated steps of protein maturation. This chain is Chaperone SurA, found in Alcanivorax borkumensis (strain ATCC 700651 / DSM 11573 / NCIMB 13689 / SK2).